Reading from the N-terminus, the 341-residue chain is Two-component response regulator EHD1 (341 aa).

Residues 12-127 (RVLVIDDDCS…ELSNIWQHIF (116 aa)) form the Response regulatory domain. Position 63 is a 4-aspartylphosphate (Asp63). Residues 195–254 (DLGKSRLTWTTQLHRQFIAAVNHLGEDKAVPKKILGIMKVKHLTREQVASHLQKYRMQLK) enclose the HTH myb-type domain. The H-T-H motif DNA-binding region spans 225 to 250 (PKKILGIMKVKHLTREQVASHLQKYR).

In terms of processing, two-component system major event consists of a His-to-Asp phosphorelay between a sensor histidine kinase (HK) and a response regulator (RR). In plants, the His-to-Asp phosphorelay involves an additional intermediate named Histidine-containing phosphotransfer protein (HPt). This multistep phosphorelay consists of a His-Asp-His-Asp sequential transfer of a phosphate group between first a His and an Asp of the HK protein, followed by the transfer to a conserved His of the HPt protein and finally the transfer to an Asp in the receiver domain of the RR protein.

Its subcellular location is the nucleus. Its function is as follows. Transcriptional activator that acts as a floral inducer to promote short-day (SD) flowering pathway. Activates Hd3a and other FT-like genes independently from Hd1. May also activate MADS-box transcription factors involved in flowering regulation. This Oryza sativa subsp. indica (Rice) protein is Two-component response regulator EHD1 (EHD1).